Here is a 228-residue protein sequence, read N- to C-terminus: FAS1 domain-containing protein NCU02579 (228 aa).

The first 18 residues, 1–18 (MRFTPYLVLAPTAAVAFA), serve as a signal peptide directing secretion. The interval 50–74 (PAVGLGPAMPPSGAPQADGPANAGG) is disordered. In terms of domain architecture, FAS1 spans 77–225 (SVMLSDVMGR…GEVWILKGVR (149 aa)).

Its subcellular location is the vacuole. In Neurospora crassa (strain ATCC 24698 / 74-OR23-1A / CBS 708.71 / DSM 1257 / FGSC 987), this protein is FAS1 domain-containing protein NCU02579.